We begin with the raw amino-acid sequence, 542 residues long: CTP synthase (542 aa).

The segment at 1-265 (MTRFIFITGG…DVQVCRHFHL (265 aa)) is amidoligase domain. A CTP-binding site is contributed by serine 13. A UTP-binding site is contributed by serine 13. Residues 14 to 19 (SLGKGL) and aspartate 71 contribute to the ATP site. 2 residues coordinate Mg(2+): aspartate 71 and glutamate 139. CTP contacts are provided by residues 146-148 (DIE), 186-191 (KTKPTQ), and lysine 222. UTP-binding positions include 186-191 (KTKPTQ) and lysine 222. A Glutamine amidotransferase type-1 domain is found at 291–541 (TIAVVGKYTS…VQAAITQSRL (251 aa)). An L-glutamine-binding site is contributed by glycine 353. Cysteine 380 (nucleophile; for glutamine hydrolysis) is an active-site residue. Residues 381 to 384 (FGMQ), glutamate 404, and arginine 469 contribute to the L-glutamine site. Residues histidine 514 and glutamate 516 contribute to the active site.

Belongs to the CTP synthase family. Homotetramer.

The enzyme catalyses UTP + L-glutamine + ATP + H2O = CTP + L-glutamate + ADP + phosphate + 2 H(+). It carries out the reaction L-glutamine + H2O = L-glutamate + NH4(+). The catalysed reaction is UTP + NH4(+) + ATP = CTP + ADP + phosphate + 2 H(+). Its pathway is pyrimidine metabolism; CTP biosynthesis via de novo pathway; CTP from UDP: step 2/2. Its activity is regulated as follows. Allosterically activated by GTP, when glutamine is the substrate; GTP has no effect on the reaction when ammonia is the substrate. The allosteric effector GTP functions by stabilizing the protein conformation that binds the tetrahedral intermediate(s) formed during glutamine hydrolysis. Inhibited by the product CTP, via allosteric rather than competitive inhibition. In terms of biological role, catalyzes the ATP-dependent amination of UTP to CTP with either L-glutamine or ammonia as the source of nitrogen. Regulates intracellular CTP levels through interactions with the four ribonucleotide triphosphates. This chain is CTP synthase, found in Rhodospirillum rubrum (strain ATCC 11170 / ATH 1.1.1 / DSM 467 / LMG 4362 / NCIMB 8255 / S1).